A 245-amino-acid polypeptide reads, in one-letter code: tRNA1(Val) (adenine(37)-N6)-methyltransferase (245 aa).

It belongs to the methyltransferase superfamily. tRNA (adenine-N(6)-)-methyltransferase family.

The protein localises to the cytoplasm. The catalysed reaction is adenosine(37) in tRNA1(Val) + S-adenosyl-L-methionine = N(6)-methyladenosine(37) in tRNA1(Val) + S-adenosyl-L-homocysteine + H(+). Its function is as follows. Specifically methylates the adenine in position 37 of tRNA(1)(Val) (anticodon cmo5UAC). The protein is tRNA1(Val) (adenine(37)-N6)-methyltransferase of Escherichia coli O157:H7 (strain EC4115 / EHEC).